The following is a 401-amino-acid chain: MDTKAFTRALKKSENYNRQGFGHAQEVATLMQSAYKSNLIQQIRENNYTLQRGEVTIKLAKTFGFCWGVERSVAMAYETRQHFPNQQIWISYELIHNPSVNQDMKDMEIKFIPVIDGQKDFSVAGNNDVVILPAFGASVQEMQILKDKNCQIVDTTCPWVSKVWNSIEKHKKKKFTSIIHGKYSHAETIATSSFADKYLIVLNMTQAQYVCNYILNGGNRDEFLAKFKQAYSEGFDPDLDLEQVGIANQTTMLKTETEEIGKLFERTMMKKYRPDQLNAHYQNFNTICDATQERQDAIAGLFNEKLDLMVVIGGFNSSNTTHLQEMAIENGIPSYHIDGAQRILSRNKIEHKPLGREVKISEGWLPEGPVVVGLTSGASTPDQAVEDTINKIVAMKLVVMN.

Residue C66 participates in [4Fe-4S] cluster binding. Residue H96 participates in (2E)-4-hydroxy-3-methylbut-2-enyl diphosphate binding. Residue H96 coordinates dimethylallyl diphosphate. H96 contributes to the isopentenyl diphosphate binding site. Position 157 (C157) interacts with [4Fe-4S] cluster. Position 185 (H185) interacts with (2E)-4-hydroxy-3-methylbut-2-enyl diphosphate. Dimethylallyl diphosphate is bound at residue H185. H185 lines the isopentenyl diphosphate pocket. E187 acts as the Proton donor in catalysis. Residue T250 coordinates (2E)-4-hydroxy-3-methylbut-2-enyl diphosphate. [4Fe-4S] cluster is bound at residue C288. (2E)-4-hydroxy-3-methylbut-2-enyl diphosphate is bound by residues S317, S318, N319, and S379. Dimethylallyl diphosphate-binding residues include S317, S318, N319, and S379. Residues S317, S318, N319, and S379 each coordinate isopentenyl diphosphate.

It belongs to the IspH family. It depends on [4Fe-4S] cluster as a cofactor.

It catalyses the reaction isopentenyl diphosphate + 2 oxidized [2Fe-2S]-[ferredoxin] + H2O = (2E)-4-hydroxy-3-methylbut-2-enyl diphosphate + 2 reduced [2Fe-2S]-[ferredoxin] + 2 H(+). The enzyme catalyses dimethylallyl diphosphate + 2 oxidized [2Fe-2S]-[ferredoxin] + H2O = (2E)-4-hydroxy-3-methylbut-2-enyl diphosphate + 2 reduced [2Fe-2S]-[ferredoxin] + 2 H(+). It functions in the pathway isoprenoid biosynthesis; dimethylallyl diphosphate biosynthesis; dimethylallyl diphosphate from (2E)-4-hydroxy-3-methylbutenyl diphosphate: step 1/1. It participates in isoprenoid biosynthesis; isopentenyl diphosphate biosynthesis via DXP pathway; isopentenyl diphosphate from 1-deoxy-D-xylulose 5-phosphate: step 6/6. Its function is as follows. Catalyzes the conversion of 1-hydroxy-2-methyl-2-(E)-butenyl 4-diphosphate (HMBPP) into a mixture of isopentenyl diphosphate (IPP) and dimethylallyl diphosphate (DMAPP). Acts in the terminal step of the DOXP/MEP pathway for isoprenoid precursor biosynthesis. This is 4-hydroxy-3-methylbut-2-enyl diphosphate reductase from Trichodesmium erythraeum (strain IMS101).